Consider the following 161-residue polypeptide: MLILDRSSPQIFISNEQQDVDIDLQSVQRLVILFLELQKVSTDQVYIYFLSDAALAQLHDEQFSDPSLTDTITLPIDRPGIQSFPHVLGEAFVSPRAAMRFLGQYTEAQLYHEISRYVVHSLLHMLGYDDQTDEDKRIMREQEDSSLTFLAQNQALLHPTV.

Zn(2+)-binding residues include His-120, His-124, and Asp-130.

This sequence belongs to the endoribonuclease YbeY family. Requires Zn(2+) as cofactor.

It is found in the cytoplasm. Functionally, single strand-specific metallo-endoribonuclease involved in late-stage 70S ribosome quality control and in maturation of the 3' terminus of the 16S rRNA. The sequence is that of Endoribonuclease YbeY from Chlamydia muridarum (strain MoPn / Nigg).